The sequence spans 1940 residues: Cilia- and flagella-associated protein 74 (1940 aa).

The disordered stretch occupies residues 52-90 (GSPAVTLRRAKAAAAANGTSSPGIRGSPSPARGPGGRLP). The span at 63–90 (AAAAANGTSSPGIRGSPSPARGPGGRLP) shows a compositional bias: low complexity. Residues 100 to 159 (ANVEQLKRRLQTVVAEVEGHQQRYDKVLLEANKATDLVHSMEAEIESLYVEAEELARRVP) adopt a coiled-coil conformation. Disordered regions lie at residues 512 to 548 (VAGL…QSLT), 1159 to 1336 (SPHV…AAAE), 1373 to 1418 (PQSQ…AAPP), 1714 to 1737 (AGDK…GASK), and 1894 to 1940 (PGSR…KKAV). Over residues 535–548 (SLTQQLAATQQSLT) the composition is skewed to low complexity. Residues 1205–1220 (DGGGGGAMANGNGSGG) are compositionally biased toward gly residues. Positions 1227-1236 (DGEPEDGEGD) are enriched in acidic residues. Residues 1260–1271 (GRGGRGGRGGAA) show a composition bias toward gly residues. A compositionally biased stretch (acidic residues) spans 1272–1282 (GEDEDEDEDAG). The segment covering 1287–1304 (RGKSSSSSKASSGRRSSS) has biased composition (low complexity). Acidic residues predominate over residues 1321–1335 (VPDDDDADAEAEAAA). Over residues 1373-1414 (PQSQNPTPSQSQSGQAPAASAPSDGASGAAAAAETAASSGPA) the composition is skewed to low complexity. Pro residues-rich tracts occupy residues 1720 to 1731 (TPAPGIKPPATP) and 1896 to 1912 (SRPP…PAPE). Positions 1913-1929 (PVAASGPGAGAAGVKKL) are enriched in low complexity. The span at 1930–1940 (VPPPSPPKKAV) shows a compositional bias: pro residues.

This sequence belongs to the CFAP74 family. As to quaternary structure, part of the PDCP1 complex composed of CFAP46, CFAP54, CFAP74 and CFAP221; the PDCP1 complex binds calmodulin.

It localises to the cytoplasm. It is found in the cytoskeleton. Its subcellular location is the cilium axoneme. Its function is as follows. As part of the central apparatus of the cilium axoneme may play a role in cilium movement and thereby cell motility. The polypeptide is Cilia- and flagella-associated protein 74 (Chlamydomonas reinhardtii (Chlamydomonas smithii)).